A 181-amino-acid polypeptide reads, in one-letter code: MFILASQSPRRQALLKRVVNDFEVQPAQIDEHETPLTAPGDYVQTLAQRKGEAVAVQYPTATILAADTAISFQGTLYGKPKDRQDAYEMLRQLSGQTHQVYTGLWLMKDGLVQQKVVQTDVTFWHLSTAEIEQYLDQNEYADKAGAYGIQGAGALLINKVNGDFYNVVGLPVSTVARMLQN.

The Proton acceptor role is filled by aspartate 67.

This sequence belongs to the Maf family. YhdE subfamily. Requires a divalent metal cation as cofactor.

Its subcellular location is the cytoplasm. It catalyses the reaction dTTP + H2O = dTMP + diphosphate + H(+). The enzyme catalyses UTP + H2O = UMP + diphosphate + H(+). In terms of biological role, nucleoside triphosphate pyrophosphatase that hydrolyzes dTTP and UTP. May have a dual role in cell division arrest and in preventing the incorporation of modified nucleotides into cellular nucleic acids. This chain is dTTP/UTP pyrophosphatase, found in Latilactobacillus sakei subsp. sakei (strain 23K) (Lactobacillus sakei subsp. sakei).